A 355-amino-acid chain; its full sequence is Dual-specificity RNA methyltransferase RlmN (355 aa).

E86 serves as the catalytic Proton acceptor. The Radical SAM core domain occupies 105-338; that stretch reads KEARYTVCVS…CTIRESKGLD (234 aa). A disulfide bridge connects residues C112 and C343. 3 residues coordinate [4Fe-4S] cluster: C119, C123, and C126. S-adenosyl-L-methionine is bound by residues 169-170, S201, 224-226, and N300; these read GE and SLH. The S-methylcysteine intermediate role is filled by C343.

The protein belongs to the radical SAM superfamily. RlmN family. [4Fe-4S] cluster serves as cofactor.

Its subcellular location is the cytoplasm. It catalyses the reaction adenosine(2503) in 23S rRNA + 2 reduced [2Fe-2S]-[ferredoxin] + 2 S-adenosyl-L-methionine = 2-methyladenosine(2503) in 23S rRNA + 5'-deoxyadenosine + L-methionine + 2 oxidized [2Fe-2S]-[ferredoxin] + S-adenosyl-L-homocysteine. The enzyme catalyses adenosine(37) in tRNA + 2 reduced [2Fe-2S]-[ferredoxin] + 2 S-adenosyl-L-methionine = 2-methyladenosine(37) in tRNA + 5'-deoxyadenosine + L-methionine + 2 oxidized [2Fe-2S]-[ferredoxin] + S-adenosyl-L-homocysteine. Specifically methylates position 2 of adenine 2503 in 23S rRNA and position 2 of adenine 37 in tRNAs. m2A2503 modification seems to play a crucial role in the proofreading step occurring at the peptidyl transferase center and thus would serve to optimize ribosomal fidelity. In Nitratiruptor sp. (strain SB155-2), this protein is Dual-specificity RNA methyltransferase RlmN.